The sequence spans 604 residues: Proline--tRNA ligase (604 aa).

The protein belongs to the class-II aminoacyl-tRNA synthetase family. ProS type 1 subfamily. In terms of assembly, homodimer.

The protein resides in the cytoplasm. The catalysed reaction is tRNA(Pro) + L-proline + ATP = L-prolyl-tRNA(Pro) + AMP + diphosphate. Its function is as follows. Catalyzes the attachment of proline to tRNA(Pro) in a two-step reaction: proline is first activated by ATP to form Pro-AMP and then transferred to the acceptor end of tRNA(Pro). As ProRS can inadvertently accommodate and process non-cognate amino acids such as alanine and cysteine, to avoid such errors it has two additional distinct editing activities against alanine. One activity is designated as 'pretransfer' editing and involves the tRNA(Pro)-independent hydrolysis of activated Ala-AMP. The other activity is designated 'posttransfer' editing and involves deacylation of mischarged Ala-tRNA(Pro). The misacylated Cys-tRNA(Pro) is not edited by ProRS. In Nostoc punctiforme (strain ATCC 29133 / PCC 73102), this protein is Proline--tRNA ligase.